We begin with the raw amino-acid sequence, 414 residues long: 3-phosphoshikimate 1-carboxyvinyltransferase (414 aa).

3-phosphoshikimate is bound by residues Lys-20, Ser-21, and Arg-25. Lys-20 contacts phosphoenolpyruvate. Phosphoenolpyruvate-binding residues include Gly-85 and Arg-113. 6 residues coordinate 3-phosphoshikimate: Ser-154, Ser-155, Gln-156, Ser-181, Asp-296, and Lys-323. Position 156 (Gln-156) interacts with phosphoenolpyruvate. The Proton acceptor role is filled by Asp-296. 3 residues coordinate phosphoenolpyruvate: Arg-327, Arg-371, and Lys-395.

This sequence belongs to the EPSP synthase family. In terms of assembly, monomer.

The protein localises to the cytoplasm. It carries out the reaction 3-phosphoshikimate + phosphoenolpyruvate = 5-O-(1-carboxyvinyl)-3-phosphoshikimate + phosphate. The protein operates within metabolic intermediate biosynthesis; chorismate biosynthesis. Functionally, catalyzes the transfer of the enolpyruvyl moiety of phosphoenolpyruvate (PEP) to the 5-hydroxyl of shikimate-3-phosphate (S3P) to produce enolpyruvyl shikimate-3-phosphate and inorganic phosphate. This Saccharolobus islandicus (strain Y.G.57.14 / Yellowstone #1) (Sulfolobus islandicus) protein is 3-phosphoshikimate 1-carboxyvinyltransferase.